The sequence spans 264 residues: Apolipoprotein A-I (264 aa).

Residues 1 to 18 (MKAVLLVVAALFLAGSQA) form the signal peptide. Tandem repeats lie at residues 67-88 (LRLS…ADFG) and 89-110 (LATQ…QIVS). A 10 X approximate tandem repeats region spans residues 67 to 264 (LRLSDNWDTL…DQASKQLAAQ (198 aa)). Residues 111-121 (EDLQDVKHKVQ) form a 3; half-length repeat. Tandem repeats lie at residues 122-143 (PYLE…EKVR), 144-165 (PLGI…EKLT), 166-187 (PLGE…TQLA), 188-207 (PFSE…LKDS), and 208-229 (ATLA…EKAK). Met193 carries the methionine sulfoxide modification. Residues 230–240 (PALEDLRQGLL) form a 9; half-length repeat. Copy 10 of the repeat occupies 241-264 (PVLENLKASILSSIDQASKQLAAQ).

It belongs to the apolipoprotein A1/A4/E family. Homodimer. Interacts with APOA1BP and CLU. Component of a sperm activating protein complex (SPAP), consisting of APOA1, an immunoglobulin heavy chain, an immunoglobulin light chain and albumin. Interacts with NDRG1. Interacts with SCGB3A2. Interacts with NAXE and YJEFN3. Post-translationally, glycosylated. Palmitoylated. In terms of processing, phosphorylation sites are present in the extracellular medium.

The protein resides in the secreted. Participates in the reverse transport of cholesterol from tissues to the liver for excretion by promoting cholesterol efflux from tissues and by acting as a cofactor for the lecithin cholesterol acyltransferase (LCAT). As part of the SPAP complex, activates spermatozoa motility. The polypeptide is Apolipoprotein A-I (APOA1) (Cavia porcellus (Guinea pig)).